Consider the following 730-residue polypeptide: ABC transporter G family member 3 (730 aa).

Positions 1-28 (MEEIQSQSDLYRSSSSSASSPTSRVPSS) are enriched in low complexity. Positions 1-100 (MEEIQSQSDL…MASPPVPEGG (100 aa)) are disordered. Residues 47–56 (DSPEWEDTPD) show a composition bias toward acidic residues. Over residues 72–91 (NDATTTPVSPSLSKMNSGSM) the composition is skewed to polar residues. Serine 93 carries the phosphoserine modification. The ABC transporter domain occupies 114–356 (IAWKDLTVTM…FSNAGFPCPI (243 aa)). ATP is bound at residue 151 to 158 (GPAKSGKS). The ABC transmembrane type-2 domain occupies 441–653 (TRVAVLTWRS…SIEGLLENEY (213 aa)). The next 6 membrane-spanning stretches (helical) occupy residues 465 to 485 (LILY…LGHS), 495 to 515 (AVFV…PSLL), 532 to 552 (AFVF…LMSI), 575 to 595 (VLNF…IACI), 600 to 620 (YWST…AGHF), and 689 to 709 (MLVL…LLRF).

The protein belongs to the ABC transporter superfamily. ABCG family. Eye pigment precursor importer (TC 3.A.1.204) subfamily.

It localises to the membrane. In Arabidopsis thaliana (Mouse-ear cress), this protein is ABC transporter G family member 3 (ABCG3).